The chain runs to 450 residues: Phosphopentomutase (450 aa).

Ser93 serves as the catalytic Phosphoserine intermediate. Residues Ser93, Asp231, Asp233, and Asp235 each coordinate Mg(2+). Residue Ser93 is modified to Phosphoserine; by autocatalysis.

This sequence belongs to the phosphohexose mutase family. As to quaternary structure, homotetramer. It depends on Mg(2+) as a cofactor. Activated by phosphorylation.

The catalysed reaction is alpha-D-ribose 1-phosphate = D-ribose 5-phosphate. The enzyme catalyses 2-deoxy-alpha-D-ribose 1-phosphate = 2-deoxy-D-ribose 5-phosphate. Catalyzes the conversion of deoxyribose 1-phosphate to deoxyribose 5-phosphate. Also shows weak activity with glucose 1-phosphate and mannose 1-phosphate. Could be involved in pentose biosynthesis. This chain is Phosphopentomutase, found in Thermococcus kodakarensis (strain ATCC BAA-918 / JCM 12380 / KOD1) (Pyrococcus kodakaraensis (strain KOD1)).